A 296-amino-acid polypeptide reads, in one-letter code: Ribose import binding protein RbsB (296 aa).

The first 25 residues, 1-25 (MNMKKLATLVSAVALSATVSANAMA), serve as a signal peptide directing secretion.

It belongs to the bacterial solute-binding protein 2 family. As to quaternary structure, the complex is composed of an ATP-binding protein (RbsA), two transmembrane proteins (RbsC) and a solute-binding protein (RbsB).

The protein localises to the periplasm. Its function is as follows. Part of the ABC transporter complex RbsABC involved in ribose import. Binds ribose. Also serves as the primary chemoreceptor for chemotaxis. This Escherichia coli (strain K12) protein is Ribose import binding protein RbsB.